The following is a 234-amino-acid chain: Coiled-coil domain-containing protein 194 (234 aa).

A signal peptide spans 1 to 43 (MAEPGPEPGRAWRLLALCGAAVFLAAAAAGGALVAWNLAASTA). The interval 44 to 63 (RSPRCPEPEQMNATVRPPDS) is disordered. A coiled-coil region spans residues 67–171 (VEELRRRLAE…LQRAGAAEAA (105 aa)). The segment at 194-234 (GTLRKESRLRPRSGSRTKPSISHRPKSGSTKGCRRPPRDPQ) is disordered. Residues 203–219 (RPRSGSRTKPSISHRPK) show a composition bias toward basic residues.

The sequence is that of Coiled-coil domain-containing protein 194 from Mus musculus (Mouse).